The following is a 443-amino-acid chain: ATP-dependent protease ATPase subunit HslU (443 aa).

Residues Ile18, 60 to 65 (GVGKTE), Asp256, Glu321, and Arg393 each bind ATP.

Belongs to the ClpX chaperone family. HslU subfamily. In terms of assembly, a double ring-shaped homohexamer of HslV is capped on each side by a ring-shaped HslU homohexamer. The assembly of the HslU/HslV complex is dependent on binding of ATP.

Its subcellular location is the cytoplasm. Its function is as follows. ATPase subunit of a proteasome-like degradation complex; this subunit has chaperone activity. The binding of ATP and its subsequent hydrolysis by HslU are essential for unfolding of protein substrates subsequently hydrolyzed by HslV. HslU recognizes the N-terminal part of its protein substrates and unfolds these before they are guided to HslV for hydrolysis. The polypeptide is ATP-dependent protease ATPase subunit HslU (Salmonella agona (strain SL483)).